Consider the following 301-residue polypeptide: uncharacterized protein (301 aa).

The region spanning 27 to 85 (YKIGRHTNKSTSPSPSNLFFNSKVLSRQHAELWLDKDTLSVYIRDVKSSNGTFVNETRL) is the FHA domain. A disordered region spans residues 187 to 236 (TGKTRDNRNNHHYSRKSSPHISSLAVPSTKHLDGERDRNLKRSTSPLSSS). Ser204 carries the phosphoserine modification. The span at 216-226 (KHLDGERDRNL) shows a compositional bias: basic and acidic residues. Residue Ser231 is modified to Phosphoserine.

In terms of assembly, interacts with sad1.

It is found in the nucleus. This is an uncharacterized protein from Schizosaccharomyces pombe (strain 972 / ATCC 24843) (Fission yeast).